A 657-amino-acid polypeptide reads, in one-letter code: Translation factor GUF1, mitochondrial (657 aa).

The transit peptide at 1 to 39 (MRGCLQSVKWLTSAVRQSQSLTSSTRFPRRLFNTSTLHY) directs the protein to the mitochondrion. Positions 59 to 239 (ERFRNFCIVA…TVIEQVPAPV (181 aa)) constitute a tr-type G domain. Residues 68-75 (AHVDHGKS), 132-136 (DTPGH), and 186-189 (NKVD) contribute to the GTP site.

The protein belongs to the TRAFAC class translation factor GTPase superfamily. Classic translation factor GTPase family. LepA subfamily.

It is found in the mitochondrion inner membrane. The catalysed reaction is GTP + H2O = GDP + phosphate + H(+). Promotes mitochondrial protein synthesis. May act as a fidelity factor of the translation reaction, by catalyzing a one-codon backward translocation of tRNAs on improperly translocated ribosomes. Binds to mitochondrial ribosomes in a GTP-dependent manner. This Blastomyces gilchristii (strain SLH14081) (Blastomyces dermatitidis) protein is Translation factor GUF1, mitochondrial.